The following is a 341-amino-acid chain: BBSome complex member BBS5 (341 aa).

Belongs to the BBS5 family. Part of BBSome complex, that contains BBS1, BBS2, BBS4, BBS5, BBS7, BBS8/TTC8, BBS9 and BBIP10. Binds to phosphoinositides. Interacts with CCDC28B. Interacts with SMO; the interaction is indicative for the association of SMO with the BBsome complex to facilitate ciliary localization of SMO. Interacts with PKD1. Interacts with DLEC1.

The protein localises to the cell projection. The protein resides in the cilium membrane. It is found in the cytoplasm. It localises to the cytoskeleton. Its subcellular location is the cilium basal body. The protein localises to the microtubule organizing center. The protein resides in the centrosome. It is found in the centriolar satellite. In terms of biological role, the BBSome complex is thought to function as a coat complex required for sorting of specific membrane proteins to the primary cilia. The BBSome complex is required for ciliogenesis but is dispensable for centriolar satellite function. This ciliogenic function is mediated in part by the Rab8 GDP/GTP exchange factor, which localizes to the basal body and contacts the BBSome. Rab8(GTP) enters the primary cilium and promotes extension of the ciliary membrane. Firstly the BBSome associates with the ciliary membrane and binds to RAB3IP/Rabin8, the guanosyl exchange factor (GEF) for Rab8 and then the Rab8-GTP localizes to the cilium and promotes docking and fusion of carrier vesicles to the base of the ciliary membrane. The BBSome complex, together with the LTZL1, controls SMO ciliary trafficking and contributes to the sonic hedgehog (SHH) pathway regulation. Required for BBSome complex ciliary localization but not for the proper complex assembly. This chain is BBSome complex member BBS5 (BBS5), found in Homo sapiens (Human).